Here is a 209-residue protein sequence, read N- to C-terminus: Fibroblast growth factor 10 (209 aa).

Residues 1-36 form the signal peptide; it reads MWKWILTHCASAFPHLPGCCCCFLLLFLVSSFPVTC. N-linked (GlcNAc...) asparagine glycosylation is found at Asn50 and Asn197.

The protein belongs to the heparin-binding growth factors family. As to quaternary structure, interacts with FGFR1 and FGFR2. Interacts with FGFBP1. Expressed abundantly in embryos and the lung, and at much lower levels in brain and heart.

It localises to the secreted. Functionally, plays an important role in the regulation of embryonic development, cell proliferation and cell differentiation. Required for normal branching morphogenesis. May play a role in wound healing. The protein is Fibroblast growth factor 10 (Fgf10) of Mus musculus (Mouse).